The primary structure comprises 65 residues: Large ribosomal subunit protein bL35 (65 aa).

Positions 1–15 (MPKLKTRKAAAKRFR) are enriched in basic residues. Residues 1-28 (MPKLKTRKAAAKRFRQTGTGKFTRRKAN) are disordered.

It belongs to the bacterial ribosomal protein bL35 family.

The sequence is that of Large ribosomal subunit protein bL35 from Cyanothece sp. (strain PCC 7425 / ATCC 29141).